Reading from the N-terminus, the 215-residue chain is Probable phosphoglycerate mutase GpmB (215 aa).

Substrate-binding positions include 8-15, 21-22, R58, R60, 82-85, and 151-152; these read RHGESEWN, QG, ELHM, and GI. The active-site Tele-phosphohistidine intermediate is the H9. Catalysis depends on E82, which acts as the Proton donor/acceptor.

The protein belongs to the phosphoglycerate mutase family. GpmB subfamily.

It catalyses the reaction (2R)-2-phosphoglycerate = (2R)-3-phosphoglycerate. Its pathway is carbohydrate degradation; glycolysis; pyruvate from D-glyceraldehyde 3-phosphate: step 3/5. This chain is Probable phosphoglycerate mutase GpmB, found in Photorhabdus laumondii subsp. laumondii (strain DSM 15139 / CIP 105565 / TT01) (Photorhabdus luminescens subsp. laumondii).